Reading from the N-terminus, the 459-residue chain is Protein maelstrom (459 aa).

A DNA-binding region (HMG box) is located at residues Ala-2–Asn-69. The segment at Asn-43–Gln-78 is disordered. Positions Ala-63 to Gln-78 are enriched in basic and acidic residues.

The protein belongs to the maelstrom family. In terms of tissue distribution, in germaria and egg chambers, it is detected in the germline. In the germarium, it is in all regions, including region I where the germ cells are dividing. In early egg chambers, it is uniformly distributed throughout the nurse cells and oocyte but, by stage 5, it is most concentrated around the outer margins of the cells, closest to the periphery of the egg chamber. Level decreases in stages 5 and 6, but most noticeably in the oocyte, where protein level remains. No detectable protein from stage 8 onward (at protein level).

The protein localises to the cytoplasm. It is found in the nucleus. Its subcellular location is the perinuclear region. It localises to the cytoplasmic ribonucleoprotein granule. Involved both in the piRNA and miRNA metabolic processes. As a component of the meiotic nuage, plays a central role during oogenesis by repressing transposable elements and preventing their mobilization, which is essential for the germline integrity. Repression of transposable elements is mediated via the piRNA metabolic process, which mediates the repression of transposable elements during meiosis by forming complexes composed of piRNAs and Piwi proteins and governs the repression of transposons. As a nuclear component, it is required for proper differentiation in the germline stem cell (GSC) lineage by repressing microRNA-7 (miR-7), thereby acting as an indirect regulator of bag-of-marbles (Bam). Acts by binding to the promoter of miR-7 gene and repressing its expression; miR-7 repression alleviates the Bam repression by miR-7, thereby allowing differentiation in the germline stem cell (GSC) lineage. Indirectly required to position the microtubule organizing center in stage 2-6 oocytes. Involved in repression of long interspersed nuclear elements (LINEs) including HeT-A, I-element, TART and possibly mst40 LINEs; may have a role in production of piwi-interacting RNA (piRNA). The protein is Protein maelstrom of Drosophila melanogaster (Fruit fly).